The chain runs to 460 residues: Elongation factor 1-alpha-A (460 aa).

Residue glycine 2 is modified to N,N,N-trimethylglycine. Lysine 3 carries the N6,N6-dimethyllysine; alternate modification. An N6-methyllysine; alternate modification is found at lysine 3. Positions 5–240 (KGHINVVVIG…DSIEPPARPT (236 aa)) constitute a tr-type G domain. The G1 stretch occupies residues 14 to 21 (GHVDSGKS). Residue 14–21 (GHVDSGKS) participates in GTP binding. Residue lysine 30 is modified to N6-methyllysine. The segment at 70-74 (GITID) is G2. The residue at position 79 (lysine 79) is an N6,N6,N6-trimethyllysine. The tract at residues 91-94 (DAPG) is G3. GTP is bound by residues 91-95 (DAPGH) and 153-156 (NKMD). Positions 153 to 156 (NKMD) are G4. Residues 192-194 (SGF) form a G5 region. Lysine 316 is subject to N6,N6-dimethyllysine; alternate. Lysine 316 is modified (N6-methyllysine; alternate). Residue lysine 390 is modified to N6-methyllysine.

The protein belongs to the TRAFAC class translation factor GTPase superfamily. Classic translation factor GTPase family. EF-Tu/EF-1A subfamily.

It is found in the cytoplasm. Functionally, this protein promotes the GTP-dependent binding of aminoacyl-tRNA to the A-site of ribosomes during protein biosynthesis. The chain is Elongation factor 1-alpha-A (tef101) from Schizosaccharomyces pombe (strain 972 / ATCC 24843) (Fission yeast).